We begin with the raw amino-acid sequence, 127 residues long: Large ribosomal subunit protein bL12 (127 aa).

Residues Lys77 and Lys88 each carry the N6-methyllysine modification.

The protein belongs to the bacterial ribosomal protein bL12 family. As to quaternary structure, homodimer. Part of the ribosomal stalk of the 50S ribosomal subunit. Forms a multimeric L10(L12)X complex, where L10 forms an elongated spine to which 2 to 4 L12 dimers bind in a sequential fashion. Binds GTP-bound translation factors.

Its function is as follows. Forms part of the ribosomal stalk which helps the ribosome interact with GTP-bound translation factors. Is thus essential for accurate translation. This Nitratidesulfovibrio vulgaris (strain DSM 19637 / Miyazaki F) (Desulfovibrio vulgaris) protein is Large ribosomal subunit protein bL12.